Here is a 619-residue protein sequence, read N- to C-terminus: Putative transcription activator BRLF1 homolog (619 aa).

Disordered regions lie at residues 301–389 and 563–603; these read LRDS…ETQS and GLVS…SDEM. 2 stretches are compositionally biased toward low complexity: residues 371 to 389 and 567 to 582; these read EAPQ…ETQS and QQQA…GGPP. Over residues 589-598 the composition is skewed to polar residues; that stretch reads QEQQQSSTDP.

Belongs to the herpesviridae TAF50 family.

Its function is as follows. Transcription activation. The polypeptide is Putative transcription activator BRLF1 homolog (50) (Connochaetes taurinus (Blue wildebeest)).